Here is a 197-residue protein sequence, read N- to C-terminus: dCTP deaminase, dUMP-forming (197 aa).

Residues 105–110 (RSSIGR), D123, 131–133 (TLE), Q152, Y166, K174, and Q178 each bind dCTP. The Proton donor/acceptor role is filled by E133. Residues 161–183 (PAERPYGHPSRDSKYIGQTRPQT) form a disordered region. Basic and acidic residues predominate over residues 165-174 (PYGHPSRDSK).

Belongs to the dCTP deaminase family. As to quaternary structure, homotrimer.

It carries out the reaction dCTP + 2 H2O = dUMP + NH4(+) + diphosphate. It participates in pyrimidine metabolism; dUMP biosynthesis; dUMP from dCTP: step 1/1. Functionally, bifunctional enzyme that catalyzes both the deamination of dCTP to dUTP and the hydrolysis of dUTP to dUMP without releasing the toxic dUTP intermediate. This chain is dCTP deaminase, dUMP-forming, found in Methanothermobacter thermautotrophicus (strain ATCC 29096 / DSM 1053 / JCM 10044 / NBRC 100330 / Delta H) (Methanobacterium thermoautotrophicum).